The primary structure comprises 1556 residues: Lysine-specific demethylase 5C (1556 aa).

Positions 14–55 constitute a JmjN domain; the sequence is CPVFEPSWAEFRDPLGYIAKIRPIAEKSGICKIRPPADWQPP. The region spanning 79-169 is the ARID domain; it reads TRVKLNYLDQ…IVYPYEMYQS (91 aa). A compositionally biased stretch (polar residues) spans 197–207; that stretch reads LRQSVQPSKFN. Residues 197–227 are disordered; sequence LRQSVQPSKFNSYGRRAKRLQPDPEPTEEDI. Residues lysine 205, lysine 229, lysine 244, and lysine 274 each participate in a glycyl lysine isopeptide (Lys-Gly) (interchain with G-Cter in SUMO2) cross-link. The interval 257–303 is disordered; it reads LRKKDKEGPECPPTVVVKEESGGDVKVESTSPKTFLESKEELSHSPE. Basic and acidic residues predominate over residues 273 to 283; sequence VKEESGGDVKV. Serine 287 is modified (phosphoserine). Residue lysine 295 forms a Glycyl lysine isopeptide (Lys-Gly) (interchain with G-Cter in SUMO2) linkage. A phosphoserine mark is found at serine 301 and serine 317. The PHD-type 1 zinc finger occupies 324–374; that stretch reads SYVCRMCSRGDEDDKLLLCDGCDDNYHIFCLLPPLPEIPKGVWRCPKCVMA. The 167-residue stretch at 468-634 folds into the JmjC domain; the sequence is EYATSGWNLN…AGRQCIEHYR (167 aa). Fe cation-binding residues include histidine 514, aspartate 517, and histidine 602. 2 positions are modified to phosphoserine: serine 893 and serine 897. Residue lysine 1127 forms a Glycyl lysine isopeptide (Lys-Gly) (interchain with G-Cter in SUMO2) linkage. The segment at 1185 to 1250 adopts a PHD-type 2 zinc-finger fold; that stretch reads TSVCVCGQVP…KFLCPLCMRS (66 aa). Disordered regions lie at residues 1315–1362 and 1441–1556; these read LQAE…SPEK and ERHG…QQQL. Residues 1335–1345 are compositionally biased toward basic and acidic residues; that stretch reads PLREGSGKDMP. A Phosphoserine modification is found at serine 1359. Over residues 1445-1460 the composition is skewed to basic residues; it reads SRARGRALERRRRRKV. Positions 1461-1478 are enriched in basic and acidic residues; it reads DRGGEGDDPAREELEPKR. Positions 1485–1500 are enriched in acidic residues; that stretch reads EAEEAQEEEELEEETG. Polar residues-rich tracts occupy residues 1513-1522 and 1530-1540; these read SPSTQENQNG and SGPSAPFSTLS. Over residues 1541 to 1556 the composition is skewed to low complexity; it reads PQLHVPCPQQPPQQQL.

This sequence belongs to the JARID1 histone demethylase family. Part of two distinct complexes, one containing E2F6, and the other containing REST. Interacts with ZMYND8. It depends on Fe(2+) as a cofactor.

Its subcellular location is the nucleus. It catalyses the reaction N(6),N(6),N(6)-trimethyl-L-lysyl(4)-[histone H3] + 3 2-oxoglutarate + 3 O2 = L-lysyl(4)-[histone H3] + 3 formaldehyde + 3 succinate + 3 CO2. Histone demethylase that specifically demethylates 'Lys-4' of histone H3, thereby playing a central role in histone code. Does not demethylate histone H3 'Lys-9', H3 'Lys-27', H3 'Lys-36', H3 'Lys-79' or H4 'Lys-20'. Demethylates trimethylated and dimethylated but not monomethylated H3 'Lys-4'. Participates in transcriptional repression of neuronal genes by recruiting histone deacetylases and REST at neuron-restrictive silencer elements. Represses the CLOCK-BMAL1 heterodimer-mediated transcriptional activation of the core clock component PER2. This is Lysine-specific demethylase 5C (KDM5C) from Canis lupus familiaris (Dog).